The following is a 605-amino-acid chain: Leucine-rich repeat-containing protein 40 (605 aa).

The interval 1–21 (MSRFKRGGKAPDPLSGFRAPK) is disordered. LRR repeat units lie at residues 83–104 (DLTKLILASNKLQALSEDISLL), 106–127 (ALVVLDIHDNQIASLPCAIREL), 129–151 (NLQKLNISHNKIKQLPNELQHLQ), 152–173 (NLKSFLLQHNQLEELPDSIGHL), 175–196 (ILEELDVSNNCLRSVSSSVGQL), 198–219 (GLVKFNLSSNKLTALPTEIGKM), 221–242 (NLRQLDCTSNLLENVPASVAGM), 244–265 (SLEQLYLRQNKLTYLPELPFLT), 266–287 (KLKELHVGNNQIQTLGPEHLQN), 290–311 (SLSVLELRYNKLKVLPKEISLL), 313–335 (GLERLDLSNNDIGSLPDTLGSLP), 336–357 (NLKSLQLDGNPLRGIRRDILNK), 429–450 (PITTVNFSKNQLTEVPARIVEM), 453–475 (SVYDVNLGFNKISSISLNLCMLL), 476–497 (KLTHLDMRNNALASLPPEMEAL), 499–520 (RLQSIILSFNRFKHFPDVLYTI), 522–543 (NLETILISSNQIGSIDPIQLKK), 546–567 (KLSTLDLQNNDLLQIPPALGNC), and 569–590 (SLRALHLEGNPFRNPRATILAK).

In Xenopus laevis (African clawed frog), this protein is Leucine-rich repeat-containing protein 40 (lrrc40).